The sequence spans 264 residues: Movement protein (264 aa).

A compositionally biased stretch (basic residues) spans 210-219 (FRTKPSKRGP). Positions 210–264 (FRTKPSKRGPKNNNNLGKGRSGGRPKPKSFDEVEKEFDNLIEDEAETSVADSDSY) are disordered. Over residues 237–247 (KSFDEVEKEFD) the composition is skewed to basic and acidic residues.

The protein belongs to the tobamovirus movement protein family. Binds to host RBCS at the plasmodesmata; this interaction seems required for viral systemic movement. In resistant plants, interacts with host MBP2C at host microtubules; this interaction prevents virus cell to cell movement. In resistant plants, interacts with host resistance (R) protein (e.g. tomato ToMV resistance protein TM-2(2), AC Q71BG9) at the host plasma membrane; this interaction triggers host defense responses leading to programmed cell death.

The protein localises to the host cytoplasm. Its subcellular location is the host cytoskeleton. The protein resides in the host cell junction. It is found in the host plasmodesma. Its function is as follows. Transports viral genome to neighboring plant cells directly through plasmosdesmata, without any budding. The movement protein allows efficient cell to cell propagation, by bypassing the host cell wall barrier. Forms a ribonucleoprotein complex with viral RNA. Binds microtubules and modulates microtubule stability. Can bind double-stranded DNA. Triggers host hypersensitive defense reaction in incompatible plants harboring resistance (R) proteins. The polypeptide is Movement protein (MP) (Tomato mosaic virus (strain LII) (ToMV)).